The primary structure comprises 375 residues: Delta(12) fatty acid dehydrogenase (375 aa).

2 helical membrane passes run 54-74 (IIAYIFYFLADKYIPILPAPL) and 77-97 (LAWPLYWFCQASILTGLWVIG). Positions 98 to 102 (HECGH) match the Histidine box-1 motif. Residues 110–130 (WVDDTVGFILHSFLMTPYFSW) traverse the membrane as a helical segment. The Histidine box-2 motif lies at 134–138 (HRNHH). The next 3 membrane-spanning stretches (helical) occupy residues 172–192 (LLIMFITFTLGFPLYLFTNIS), 218–238 (VLLSDLGLLAVLYGVKLAVAA), and 242–262 (AWVTCIYGIPVLGVFIFFDII). The Histidine box-3 signature appears at 308 to 312 (HVMHH).

This sequence belongs to the fatty acid desaturase type 1 family. Fe cation serves as cofactor. As to expression, seed.

Its subcellular location is the membrane. The enzyme catalyses a (9Z,12Z)-octadecadienoyl-containing glycerolipid + 2 Fe(II)-[cytochrome b5] + O2 + 2 H(+) = a (9Z)-octadec-9-en-12-ynoyl-containing glycerolipid + 2 Fe(III)-[cytochrome b5] + 2 H2O. It participates in lipid metabolism; polyunsaturated fatty acid biosynthesis. Functionally, changes the delta-12 double bond of linoleic acid into a triple bond in the biosynthesis of crepenynic acid. This chain is Delta(12) fatty acid dehydrogenase, found in Crepis alpina (Hawksbeard).